Reading from the N-terminus, the 381-residue chain is Cytochrome b (381 aa).

The next 4 helical transmembrane spans lie at 34-54 (FGSLLGLCLIMQIITGLFLAM), 78-99 (WLMRNIHAYGASFFFICIYLHI), 114-134 (WNIGVVLLFLLMATAFVGYVL), and 179-199 (FFAFHFLLPFLILALSVIHIL). Residues H84 and H98 each contribute to the heme b site. 2 residues coordinate heme b: H183 and H197. H202 is an a ubiquinone binding site. The next 4 helical transmembrane spans lie at 227 to 247 (YKDLFGFLIVITLLATLALFM), 289 to 309 (LGGVLALLFSIFILLLVPLLH), 321 to 341 (LTQIFFWSLVTNAIILTWIGG), and 348 to 368 (FIMVGQIASVAYFSLFLFVIP).

The protein belongs to the cytochrome b family. As to quaternary structure, the cytochrome bc1 complex contains 3 respiratory subunits (MT-CYB, CYC1 and UQCRFS1), 2 core proteins (UQCRC1 and UQCRC2) and probably 6 low-molecular weight proteins. Heme b is required as a cofactor.

It is found in the mitochondrion inner membrane. Its function is as follows. Component of the ubiquinol-cytochrome c reductase complex (complex III or cytochrome b-c1 complex) that is part of the mitochondrial respiratory chain. The b-c1 complex mediates electron transfer from ubiquinol to cytochrome c. Contributes to the generation of a proton gradient across the mitochondrial membrane that is then used for ATP synthesis. This chain is Cytochrome b (mt-cyb), found in Scyliorhinus canicula (Small-spotted catshark).